We begin with the raw amino-acid sequence, 632 residues long: MAU2 chromatid cohesion factor homolog (632 aa).

TPR repeat units follow at residues 453–486 (GGFYYVQGLHAFHKNSFHEAKRFLRETLKMANAE) and 493–526 (SCSLVLLSHVFLSIGNSKESMNMVTPAMQLASKI).

Belongs to the SCC4/mau-2 family. Interacts with Nipped-B to form the cohesin loading complex.

Its subcellular location is the nucleus. The protein resides in the nucleoplasm. Functionally, required for association of the cohesin complex with chromatin during interphase. Plays a role in sister chromatid cohesion and normal progression through prometaphase. This is MAU2 chromatid cohesion factor homolog from Drosophila simulans (Fruit fly).